The chain runs to 31 residues: Cytochrome b6-f complex subunit 6 (31 aa).

The helical transmembrane segment at 3–23 (ALIGYILLMTLMFSLAAGLYF) threads the bilayer.

It belongs to the PetL family. In terms of assembly, the 4 large subunits of the cytochrome b6-f complex are cytochrome b6, subunit IV (17 kDa polypeptide, PetD), cytochrome f and the Rieske protein, while the 4 small subunits are PetG, PetL, PetM and PetN. The complex functions as a dimer.

The protein resides in the plastid. It is found in the chloroplast thylakoid membrane. Functionally, component of the cytochrome b6-f complex, which mediates electron transfer between photosystem II (PSII) and photosystem I (PSI), cyclic electron flow around PSI, and state transitions. PetL is important for photoautotrophic growth as well as for electron transfer efficiency and stability of the cytochrome b6-f complex. This chain is Cytochrome b6-f complex subunit 6, found in Emiliania huxleyi (Coccolithophore).